A 158-amino-acid polypeptide reads, in one-letter code: RNA pyrophosphohydrolase (158 aa).

In terms of domain architecture, Nudix hydrolase spans 8 to 152 (PYRPCAGVML…KRALYRGLIE (145 aa)). Positions 42 to 63 (GGIDEGEDAEKAAIRELGEETG) match the Nudix box motif.

It belongs to the Nudix hydrolase family. RppH subfamily. A divalent metal cation is required as a cofactor.

Functionally, accelerates the degradation of transcripts by removing pyrophosphate from the 5'-end of triphosphorylated RNA, leading to a more labile monophosphorylated state that can stimulate subsequent ribonuclease cleavage. In Sphingopyxis alaskensis (strain DSM 13593 / LMG 18877 / RB2256) (Sphingomonas alaskensis), this protein is RNA pyrophosphohydrolase.